Reading from the N-terminus, the 211-residue chain is Large ribosomal subunit protein eL13 (211 aa).

Lysine 16 is modified (N6-acetyllysine). Phosphoserine occurs at positions 52, 77, and 106. Glycyl lysine isopeptide (Lys-Gly) (interchain with G-Cter in SUMO2) cross-links involve residues lysine 123 and lysine 145. A Glycyl lysine isopeptide (Lys-Gly) (interchain with G-Cter in SUMO1); alternate cross-link involves residue lysine 174. Residues lysine 174 and lysine 177 each participate in a glycyl lysine isopeptide (Lys-Gly) (interchain with G-Cter in SUMO2); alternate cross-link. Lysine 177 is modified (N6-acetyllysine; alternate).

It belongs to the eukaryotic ribosomal protein eL13 family. In terms of assembly, component of the 60S large ribosomal subunit (LSU).

It is found in the cytoplasm. Component of the ribosome, a large ribonucleoprotein complex responsible for the synthesis of proteins in the cell. The small ribosomal subunit (SSU) binds messenger RNAs (mRNAs) and translates the encoded message by selecting cognate aminoacyl-transfer RNA (tRNA) molecules. The large subunit (LSU) contains the ribosomal catalytic site termed the peptidyl transferase center (PTC), which catalyzes the formation of peptide bonds, thereby polymerizing the amino acids delivered by tRNAs into a polypeptide chain. The nascent polypeptides leave the ribosome through a tunnel in the LSU and interact with protein factors that function in enzymatic processing, targeting, and the membrane insertion of nascent chains at the exit of the ribosomal tunnel. As part of the LSU, it is probably required for its formation and the maturation of rRNAs. Plays a role in bone development. In Cricetulus griseus (Chinese hamster), this protein is Large ribosomal subunit protein eL13 (RPL13).